A 128-amino-acid chain; its full sequence is Ribonuclease P protein component 4 (128 aa).

Zn(2+) contacts are provided by cysteine 67, cysteine 70, cysteine 96, and cysteine 99.

It belongs to the eukaryotic/archaeal RNase P protein component 4 family. In terms of assembly, consists of a catalytic RNA component and at least 4-5 protein subunits. Requires Zn(2+) as cofactor.

The protein resides in the cytoplasm. It carries out the reaction Endonucleolytic cleavage of RNA, removing 5'-extranucleotides from tRNA precursor.. Functionally, part of ribonuclease P, a protein complex that generates mature tRNA molecules by cleaving their 5'-ends. This chain is Ribonuclease P protein component 4, found in Methanopyrus kandleri (strain AV19 / DSM 6324 / JCM 9639 / NBRC 100938).